Reading from the N-terminus, the 489-residue chain is MESTFSSPAEAALQREAGVPGQFTPPEDLDRVYELERVTKFVCDLGCQRVTLQFPDQLLGDAGAVAARLEEVTGAKMFILGDTAYGSCCVDVLGAEQAGAQALVHFGPACLSPPASQLPITFVLGQRPVALELCAKAFEAQNPDPTAPVVLLSEPACAHALEPLAMLLLPKYQDLLISRPALPLPVGSPSSQPESLERFGRCFPLNPGRRLEEYGAFYVGASQASSDSSLDPDLSRLLLGWTPGRPFFSCCPDTGQTQDQGAKAGRLRARRLYLIERARDARVVGLLAGTLGVARHREALAHLRKLTEAAGKRSYVLAVGKPTPAKLANFPEMDVFVLLACPLGALAPQPSGGFFRPVLTPCELEAACNPAWPPPGLAPHLTHYAELLPGSPFHVPLPPPESELWDTPDVSLISGELRPPPPWKSSDDTRCSALIPRPQLELAESSPAASFLSSRNWQGLEPRLGQTPVKEAVRGRRGIAIAYEDEGSS.

Position 1 is an N-acetylmethionine (M1). S7 carries the post-translational modification Phosphoserine. [4Fe-4S] cluster is bound by residues C89, C110, and C341. At S446 the chain carries Phosphoserine. At T467 the chain carries Phosphothreonine. S488 carries the post-translational modification Phosphoserine.

This sequence belongs to the DPH1/DPH2 family. DPH2 subfamily. Component of the 2-(3-amino-3-carboxypropyl)histidine synthase complex composed of DPH1, DPH2, DPH3 and a NADH-dependent reductase. Interacts with DPH1. The cofactor is [4Fe-4S] cluster.

Its pathway is protein modification; peptidyl-diphthamide biosynthesis. In terms of biological role, required for the first step of diphthamide biosynthesis, a post-translational modification of histidine which occurs in elongation factor 2. DPH1 and DPH2 transfer a 3-amino-3-carboxypropyl (ACP) group from S-adenosyl-L-methionine (SAM) to a histidine residue, the reaction is assisted by a reduction system comprising DPH3 and a NADH-dependent reductase. Facilitates the reduction of the catalytic iron-sulfur cluster found in the DPH1 subunit. In Mus musculus (Mouse), this protein is 2-(3-amino-3-carboxypropyl)histidine synthase subunit 2 (Dph2).